The following is a 272-amino-acid chain: Short-chain dehydrogenase srdC (272 aa).

Residues isoleucine 15, aspartate 65, arginine 127, tyrosine 173, lysine 177, valine 206, and threonine 208 each contribute to the NADP(+) site. Catalysis depends on tyrosine 173, which acts as the Proton donor. Lysine 177 acts as the Lowers pKa of active site Tyr in catalysis.

This sequence belongs to the short-chain dehydrogenases/reductases (SDR) family.

Short-chain dehydrogenase; part of the gene cluster that mediates the biosynthesis of sordarial, a salicylic aldehyde structurally related to the phytotoxin pyriculol. The most interesting aspect of this pathway is formation of an aromatic product from the highly reducing polyketide synthase srdA. SrdA synthesizes a reduced polyketide chain from one molecule of acetyl-CoA and five molecules of malonyl-CoA. The polyketide chain is then reductively released as an aldehyde. The oxidoreductases srdC, srdD and srdE then oxidize one of the hydroxy groups to facilitate the intramolecular aldol condensation, followed by dehydration to yield a salicylic aldehyde. This aldehyde can undergo facile reduction by endogenous reductases to yield the alcohol 1-hydroxy-2-hydroxymethyl-3-pent-1,3-dienylbenzene. The flavin-dependent srdI counteract against the propensity of the aldehydes to be reduced under physiological conditions and is responsible for reoxidizing 1-hydroxy-2-hydroxymethyl-3-pent-1,3-dienylbenzene back to the salicylic aldehyde. This salicylic aldehyde is then selectively epoxidized by the cupin-domain-containing oxidoreductase srdB to yield the epoxide, which can be hydrolyzed stereoselectively by the hydrolase srdG to give the final product sordarial. The protein is Short-chain dehydrogenase srdC of Neurospora crassa (strain ATCC 24698 / 74-OR23-1A / CBS 708.71 / DSM 1257 / FGSC 987).